Here is a 31-residue protein sequence, read N- to C-terminus: Cyclotide vibi-F (31 aa).

The segment at residues 1 to 31 is a cross-link (cyclopeptide (Gly-Asn)); it reads GTIPCGESCVFIPCLTSALGCSCKSKVCYKN. 3 disulfides stabilise this stretch: cysteine 5/cysteine 21, cysteine 9/cysteine 23, and cysteine 14/cysteine 28.

Post-translationally, this is a cyclic peptide.

In terms of biological role, probably participates in a plant defense mechanism. In Viola biflora (Yellow wood violet), this protein is Cyclotide vibi-F.